A 124-amino-acid chain; its full sequence is Fluoride-specific ion channel FluC (124 aa).

4 helical membrane passes run 5–25 (LVVFVGAGLGGALRHGVNLAA), 36–56 (TMIINIAGSLAMGLLTGWFAV), 70–90 (TGILGGFTTFSTFSLEAFLLM), and 100–120 (LYVLGSVAAGIAGVGASLAVI). Na(+)-binding residues include glycine 74 and threonine 77.

Belongs to the fluoride channel Fluc/FEX (TC 1.A.43) family.

The protein resides in the cell inner membrane. The enzyme catalyses fluoride(in) = fluoride(out). With respect to regulation, na(+) is not transported, but it plays an essential structural role and its presence is essential for fluoride channel function. In terms of biological role, fluoride-specific ion channel. Important for reducing fluoride concentration in the cell, thus reducing its toxicity. The polypeptide is Fluoride-specific ion channel FluC (Methylobacterium nodulans (strain LMG 21967 / CNCM I-2342 / ORS 2060)).